Reading from the N-terminus, the 212-residue chain is CRIB domain-containing protein RIC6 (212 aa).

The CRIB domain occupies 34-47; that stretch reads IGNPTDVKHVAHIG. The interval 51-212 is disordered; sequence PSANATAPSW…MPQFDNRDDF (162 aa). Over residues 53-65 the composition is skewed to polar residues; sequence ANATAPSWMTEFN. Positions 106–121 are enriched in basic and acidic residues; it reads AASEKGSPTKDKSSDK. Residues 192–202 are compositionally biased toward polar residues; the sequence is EYMSETGSVRS.

Interacts with ARAC11/ROP1. Expressed in flowers and pollen.

The protein resides in the cell membrane. In terms of biological role, functions as a downstream effector of Rho-related GTP binding proteins of the 'Rho of Plants' (ROPs) family. Participates in the propagation of ROP GTPase signals in specific cellular responses. Is involved in pollen tube growth regulation through its interaction with ARAC11/ROP1. The sequence is that of CRIB domain-containing protein RIC6 (RIC6) from Arabidopsis thaliana (Mouse-ear cress).